A 142-amino-acid polypeptide reads, in one-letter code: Protein archease (142 aa).

Ca(2+)-binding residues include Asp-12, Asp-141, and Ile-142.

Belongs to the archease family. As to quaternary structure, in solution, exists as a monomer, trimer and hexamer. Oligomeric states form a tripartite complex with tRNA and PAB1947 methyltransferase.

Activates the tRNA-splicing ligase complex by facilitating the enzymatic turnover of catalytic subunit RtcB. Acts by promoting the guanylylation of RtcB, a key intermediate step in tRNA ligation. Can also alter the NTP specificity of RtcB such that ATP, dGTP or ITP is used efficiently. Chaperone or modulator of proteins involved in DNA or RNA processing. Protects the tRNA (cytosine-5-)-methyltransferase PAB1947 against aggregation and increases its specificity. In Pyrococcus abyssi (strain GE5 / Orsay), this protein is Protein archease.